The following is a 574-amino-acid chain: Proline--tRNA ligase (574 aa).

It belongs to the class-II aminoacyl-tRNA synthetase family. ProS type 1 subfamily. Homodimer.

It localises to the cytoplasm. The catalysed reaction is tRNA(Pro) + L-proline + ATP = L-prolyl-tRNA(Pro) + AMP + diphosphate. In terms of biological role, catalyzes the attachment of proline to tRNA(Pro) in a two-step reaction: proline is first activated by ATP to form Pro-AMP and then transferred to the acceptor end of tRNA(Pro). As ProRS can inadvertently accommodate and process non-cognate amino acids such as alanine and cysteine, to avoid such errors it has two additional distinct editing activities against alanine. One activity is designated as 'pretransfer' editing and involves the tRNA(Pro)-independent hydrolysis of activated Ala-AMP. The other activity is designated 'posttransfer' editing and involves deacylation of mischarged Ala-tRNA(Pro). The misacylated Cys-tRNA(Pro) is not edited by ProRS. In Desulfovibrio desulfuricans (strain ATCC 27774 / DSM 6949 / MB), this protein is Proline--tRNA ligase.